We begin with the raw amino-acid sequence, 988 residues long: DNA-binding protein SMUBP-2 (988 aa).

Alanine 2 is subject to N-acetylalanine. Residues 213 to 220, glutamine 402, tyrosine 441, and glutamate 570 each bind ATP; that span reads GPPGTGKT. Residues 637–783 form an SS DNA-binding region; sequence TAFEYLDDIV…KARHITVSRR (147 aa). Disordered stretches follow at residues 651 to 722, 765 to 820, and 835 to 872; these read THEG…GGTD, LKHD…PHGS, and RQQGCQAQSQLGGGSRPQKAPQKKKKKEPKGPAMALPS. The span at 702 to 718 shows a compositional bias: polar residues; that stretch reads SQVQPQHSSKANGSDRT. One can recognise an R3H domain in the interval 721–784; the sequence is TDRTEHFRAM…ARHITVSRRS (64 aa). Residues 765–775 are compositionally biased toward basic and acidic residues; the sequence is LKHDSTGEGKA. Serine 797 and serine 800 each carry phosphoserine. Residues 802 to 817 are compositionally biased toward low complexity; sequence AQAEPEPQVEQPVGQP. Polar residues predominate over residues 835 to 844; it reads RQQGCQAQSQ. Positions 857–861 match the Nuclear localization signal motif; sequence KKKKK. Residues 884–933 form an AN1-type zinc finger; the sequence is VKADNTCSFTKCSASTTTLGQFCMHCSRRYCLSHHLPEIHGCGEKARAHA. Zn(2+) contacts are provided by cysteine 890, cysteine 895, cysteine 906, cysteine 909, cysteine 914, histidine 917, histidine 923, and cysteine 925. A disordered region spans residues 943 to 988; that stretch reads LYAGSGTKDRALDPAKRAQLQRKLDKKLGELSSQRTSKKKEKERGT. The segment covering 949-971 has biased composition (basic and acidic residues); sequence TKDRALDPAKRAQLQRKLDKKLG. A coiled-coil region spans residues 957–986; sequence AKRAQLQRKLDKKLGELSSQRTSKKKEKER.

Belongs to the DNA2/NAM7 helicase family. Homooligomer. Interacts with RUVBL1. Interacts with RUVBL2. Interacts with GTF3C1. Interacts with ABT1. Interacts with ribosomes. In terms of tissue distribution, expressed in liver, skin, muscle, heart, brain, spleen and kidney.

The protein resides in the nucleus. Its subcellular location is the cytoplasm. It is found in the cell projection. It localises to the axon. The catalysed reaction is ATP + H2O = ADP + phosphate + H(+). Functionally, 5' to 3' helicase that unwinds RNA and DNA duplexes in an ATP-dependent reaction. Specific to 5'-phosphorylated single-stranded guanine-rich sequences. May play a role in RNA metabolism, ribosome biogenesis or initiation of translation. May play a role in regulation of transcription. Interacts with tRNA-Tyr. The polypeptide is DNA-binding protein SMUBP-2 (Ighmbp2) (Rattus norvegicus (Rat)).